The chain runs to 196 residues: MPIGVPKVPFQIPGEEDASWVDVYNRLYRERLLFLGQEVDSDISNQLIGLMVYLSIEDDTKEIYLFINSPGGWVIPGVAIYDTMQFVRPEVHTICMGLAASMGSFLLVGGEITKRLAFPHARVMIHQPASYFFGAQTGEFILEAEELLKLRETLTRVYVQRTGKPLWVISEDMERDVFMSAKDAQAYGIVDLVAVE.

Catalysis depends on serine 101, which acts as the Nucleophile. The active site involves histidine 126.

Belongs to the peptidase S14 family. As to quaternary structure, component of the chloroplastic Clp protease core complex.

Its subcellular location is the plastid. It carries out the reaction Hydrolysis of proteins to small peptides in the presence of ATP and magnesium. alpha-casein is the usual test substrate. In the absence of ATP, only oligopeptides shorter than five residues are hydrolyzed (such as succinyl-Leu-Tyr-|-NHMec, and Leu-Tyr-Leu-|-Tyr-Trp, in which cleavage of the -Tyr-|-Leu- and -Tyr-|-Trp bonds also occurs).. In terms of biological role, cleaves peptides in various proteins in a process that requires ATP hydrolysis. Has a chymotrypsin-like activity. Plays a major role in the degradation of misfolded proteins. This chain is ATP-dependent Clp protease proteolytic subunit (clpP), found in Epifagus virginiana (Beechdrops).